The chain runs to 162 residues: Novel acetylcholine receptor chaperone (162 aa).

Residues 1–5 (MASPR) lie on the Cytoplasmic side of the membrane. Residues 6–26 (TVTIVALSVTLGLFFVFMGTI) traverse the membrane as a helical segment. At 27–61 (KLTPRLSKDAYSEMKRAYKSYVKALPALKKIGISS) the chain is on the lumenal side. Residues 62–82 (VFLRKAIGSLELACGIVLTLV) form a helical membrane-spanning segment. At 83-88 (PGRPKD) the chain is on the cytoplasmic side. The helical transmembrane segment at 89-109 (VANFILLLLVLIVLFFHQLVG) threads the bilayer. Residues 110–114 (DPLKR) are Lumenal-facing. The helical transmembrane segment at 115–131 (YAHALVFGILLTCRLLV) threads the bilayer. Residues 132 to 162 (SRQPEEEFPEKKLSRGNNGAHSREPIKMKVS) are Cytoplasmic-facing. Residues 141–162 (EKKLSRGNNGAHSREPIKMKVS) are disordered. Residues 152-162 (HSREPIKMKVS) show a composition bias toward basic and acidic residues.

It belongs to the DoxX family.

Its subcellular location is the peroxisome membrane. The protein resides in the cytoplasmic vesicle. It is found in the endoplasmic reticulum membrane. In terms of biological role, molecular chaperone which mediates the proper assembly and functional expression of the nicotinic acetylcholine receptors (nAChRs) throughout the brain. Essential for the proper folding, assembly, function and surface trafficking of alpha-7 (CHRNA7), alpha-4-beta-2, alpha-3-beta-2 and alpha-3-beta-4 receptors. This Xenopus tropicalis (Western clawed frog) protein is Novel acetylcholine receptor chaperone (tmem35a).